We begin with the raw amino-acid sequence, 200 residues long: NADH-quinone oxidoreductase subunit C (200 aa).

The protein belongs to the complex I 30 kDa subunit family. In terms of assembly, NDH-1 is composed of 14 different subunits. Subunits NuoB, C, D, E, F, and G constitute the peripheral sector of the complex.

It localises to the cell inner membrane. The enzyme catalyses a quinone + NADH + 5 H(+)(in) = a quinol + NAD(+) + 4 H(+)(out). Functionally, NDH-1 shuttles electrons from NADH, via FMN and iron-sulfur (Fe-S) centers, to quinones in the respiratory chain. The immediate electron acceptor for the enzyme in this species is believed to be ubiquinone. Couples the redox reaction to proton translocation (for every two electrons transferred, four hydrogen ions are translocated across the cytoplasmic membrane), and thus conserves the redox energy in a proton gradient. The polypeptide is NADH-quinone oxidoreductase subunit C (Rhizobium rhizogenes (strain K84 / ATCC BAA-868) (Agrobacterium radiobacter)).